A 153-amino-acid polypeptide reads, in one-letter code: UPF0260 protein YcgN (153 aa).

Belongs to the UPF0260 family.

This Salmonella dublin (strain CT_02021853) protein is UPF0260 protein YcgN.